The primary structure comprises 255 residues: Putative keratin-87 protein (255 aa).

The IF rod domain maps to 1–255; the sequence is MEANSGRLAS…SRGCVRALVL (255 aa). Coiled coils occupy residues 19-81 and 147-227; these read LEGY…EIRV and LRRT…VMNS.

It belongs to the intermediate filament family. Heterotetramer of two type I and two type II keratins.

This is Putative keratin-87 protein (KRT87P) from Homo sapiens (Human).